We begin with the raw amino-acid sequence, 93 residues long: Small ribosomal subunit protein uS19 (93 aa).

It belongs to the universal ribosomal protein uS19 family.

Its function is as follows. Protein S19 forms a complex with S13 that binds strongly to the 16S ribosomal RNA. This chain is Small ribosomal subunit protein uS19, found in Anaplasma marginale (strain Florida).